A 68-amino-acid chain; its full sequence is Large ribosomal subunit protein eL24 (68 aa).

Cys7, Cys10, Cys33, and Cys37 together coordinate Zn(2+). Residues 7-37 form a C4-type zinc finger; the sequence is CSYCGREFEPGTGKMFVRNDGRVLFFCSSKC.

Belongs to the eukaryotic ribosomal protein eL24 family. Part of the 50S ribosomal subunit. Forms a cluster with proteins L3 and L14. Zn(2+) serves as cofactor.

Functionally, binds to the 23S rRNA. The protein is Large ribosomal subunit protein eL24 of Thermococcus onnurineus (strain NA1).